The sequence spans 158 residues: 6,7-dimethyl-8-ribityllumazine synthase (158 aa).

5-amino-6-(D-ribitylamino)uracil contacts are provided by residues Phe23, 61-63, and 85-87; these read SFE and AVI. Residue 90–91 coordinates (2S)-2-hydroxy-3-oxobutyl phosphate; that stretch reads ET. His93 acts as the Proton donor in catalysis. Residue Phe118 participates in 5-amino-6-(D-ribitylamino)uracil binding. Arg132 contributes to the (2S)-2-hydroxy-3-oxobutyl phosphate binding site.

This sequence belongs to the DMRL synthase family.

It carries out the reaction (2S)-2-hydroxy-3-oxobutyl phosphate + 5-amino-6-(D-ribitylamino)uracil = 6,7-dimethyl-8-(1-D-ribityl)lumazine + phosphate + 2 H2O + H(+). It participates in cofactor biosynthesis; riboflavin biosynthesis; riboflavin from 2-hydroxy-3-oxobutyl phosphate and 5-amino-6-(D-ribitylamino)uracil: step 1/2. In terms of biological role, catalyzes the formation of 6,7-dimethyl-8-ribityllumazine by condensation of 5-amino-6-(D-ribitylamino)uracil with 3,4-dihydroxy-2-butanone 4-phosphate. This is the penultimate step in the biosynthesis of riboflavin. This Prochlorococcus marinus subsp. pastoris (strain CCMP1986 / NIES-2087 / MED4) protein is 6,7-dimethyl-8-ribityllumazine synthase.